The sequence spans 382 residues: Alkanesulfonate monooxygenase (382 aa).

This sequence belongs to the SsuD family. Homotetramer.

The enzyme catalyses an alkanesulfonate + FMNH2 + O2 = an aldehyde + FMN + sulfite + H2O + 2 H(+). Catalyzes the desulfonation of aliphatic sulfonates. This Yersinia pseudotuberculosis serotype O:1b (strain IP 31758) protein is Alkanesulfonate monooxygenase.